Consider the following 269-residue polypeptide: Expansin-B11 (269 aa).

The N-terminal stretch at 1–30 is a signal peptide; sequence MTVVSIMWSLVQVQVLVAVALAFLVGGAWC. Residue asparagine 40 is glycosylated (N-linked (GlcNAc...) asparagine). One can recognise an Expansin-like EG45 domain in the interval 69–175; it reads GGGCGYKDVN…RRVKCKYGSK (107 aa). Intrachain disulfides connect cysteine 72-cysteine 100, cysteine 103-cysteine 170, and cysteine 108-cysteine 114. In terms of domain architecture, Expansin-like CBD spans 187–268; sequence NYLALLVKYV…GWKPNTAYTA (82 aa).

The protein belongs to the expansin family. Expansin B subfamily. In terms of tissue distribution, expressed in pollen.

Its subcellular location is the secreted. It is found in the cell wall. The protein resides in the membrane. May aid fertilization by loosening the cell wall of the stigma and style, thereby facilitating penetration of the pollen tube. Acts selectively on grass cell walls, which are relatively poor in pectins and xyloglucans and rich in glucuronoarabinoxylans and (1-3),(1-4)-beta-D-glucans, when compared with cell walls of other angiosperms, including other monocots. The chain is Expansin-B11 (EXPB11) from Zea mays (Maize).